The primary structure comprises 531 residues: Non-muscle caldesmon (531 aa).

The segment at Ala20–Gln200 is myosin and calmodulin-binding. The tract at residues Tyr21–Lys379 is disordered. Over residues Gln41 to Glu50 the composition is skewed to basic and acidic residues. The segment covering Gly54 to Ala68 has biased composition (polar residues). The segment covering Arg93–Asp116 has biased composition (basic and acidic residues). A compositionally biased stretch (polar residues) spans Thr120–Asn133. Ser123 carries the phosphoserine modification. A compositionally biased stretch (basic and acidic residues) spans Gly143–Met156. Positions Val162–Gln172 are enriched in polar residues. Positions Gln200–Thr227 are enriched in basic and acidic residues. Ser249 is subject to Phosphoserine; by CDK1. Basic and acidic residues-rich tracts occupy residues Ala271–Gln297 and Glu305–Pro372. The tract at residues Glu303–Lys360 is tropomyosin-binding. Ser382 is modified (phosphoserine). Lys384 is covalently cross-linked (Glycyl lysine isopeptide (Lys-Gly) (interchain with G-Cter in SUMO2)). Residues Leu392–Ile424 are strong actin-binding. Phosphoserine is present on Ser395. The segment at Lys402–Lys412 is tropomyosin-binding. Positions Trp454 to Phe460 are calmodulin-binding. Positions Ser458 to Val531 are disordered. Residues Val459–Lys471 are compositionally biased toward polar residues. Ser462 carries the phosphoserine; by CDK1 modification. Thr468 bears the Phosphothreonine; by CDK1 mark. A phosphoserine; by CDK1 mark is found at Ser491 and Ser497. A compositionally biased stretch (basic and acidic residues) spans Ser503–Val522. The segment at Arg506–Val531 is weak actin-binding. At Ser527 the chain carries Phosphoserine; by CDK1.

It belongs to the caldesmon family. In non-muscle cells, phosphorylation by CDK1 during mitosis causes caldesmon to dissociate from microfilaments. Phosphorylation reduces caldesmon binding to actin, myosin, and calmodulin as well as its inhibition of actomyosin ATPase activity. Phosphorylation also occurs in both quiescent and dividing smooth muscle cells with similar effects on the interaction with actin and calmodulin and on microfilaments reorganization. CDK1-mediated phosphorylation promotes Schwann cell migration during peripheral nerve regeneration. High-molecular-weight caldesmon (h-caldesmon) is predominantly expressed in smooth muscles, whereas low-molecular-weight caldesmon (l-caldesmon) is widely distributed in non-muscle tissues and cells. Not expressed in skeletal muscle or heart.

The protein resides in the cytoplasm. It localises to the cytoskeleton. It is found in the myofibril. The protein localises to the stress fiber. Functionally, actin- and myosin-binding protein implicated in the regulation of actomyosin interactions in smooth muscle and nonmuscle cells (could act as a bridge between myosin and actin filaments). Stimulates actin binding of tropomyosin which increases the stabilization of actin filament structure. In muscle tissues, inhibits the actomyosin ATPase by binding to F-actin. This inhibition is attenuated by calcium-calmodulin and is potentiated by tropomyosin. Interacts with actin, myosin, two molecules of tropomyosin and with calmodulin. Also plays an essential role during cellular mitosis and receptor capping. Involved in Schwann cell migration during peripheral nerve regeneration. In Rattus norvegicus (Rat), this protein is Non-muscle caldesmon (Cald1).